The sequence spans 87 residues: Asparagine--tRNA ligase, cytoplasmic (87 aa).

This sequence belongs to the class-II aminoacyl-tRNA synthetase family.

It is found in the cytoplasm. It carries out the reaction tRNA(Asn) + L-asparagine + ATP = L-asparaginyl-tRNA(Asn) + AMP + diphosphate + H(+). The polypeptide is Asparagine--tRNA ligase, cytoplasmic (DED81) (Saccharomyces paradoxus (Yeast)).